Here is a 747-residue protein sequence, read N- to C-terminus: Cysteine--tRNA ligase, cytoplasmic (747 aa).

A disordered region spans residues 1–26 (MTESWEQGKGRRTQPPWSAPNTNEQP). The segment covering 15-25 (PPWSAPNTNEQ) has biased composition (polar residues). Cysteine 54 lines the Zn(2+) pocket. Residue glycine 55 coordinates L-cysteine. A 'HIGH' region motif is present at residues 56-66 (PTVYDASHMGH). Position 95 (threonine 95) interacts with L-cysteine. A 'KIIK' region motif is present at residues 100–103 (KIIK). Zn(2+) contacts are provided by cysteine 347, histidine 372, and glutamate 376. L-cysteine is bound at residue histidine 372. Residues 405–409 (KMSKS) carry the 'KMSKS' region motif. An ATP-binding site is contributed by lysine 408. The segment covering 651-683 (EEKRKAEEEKQRKKEEAARKKQQQEAAKLEKMK) has biased composition (basic and acidic residues). Disordered stretches follow at residues 651–685 (EEKR…MKIS) and 700–721 (FDES…GQTK).

The protein belongs to the class-I aminoacyl-tRNA synthetase family. As to quaternary structure, homodimer. Zn(2+) is required as a cofactor.

The protein localises to the cytoplasm. It catalyses the reaction tRNA(Cys) + L-cysteine + ATP = L-cysteinyl-tRNA(Cys) + AMP + diphosphate. Functionally, catalyzes the ATP-dependent ligation of cysteine to tRNA(Cys). The chain is Cysteine--tRNA ligase, cytoplasmic (cars1) from Xenopus laevis (African clawed frog).